The chain runs to 144 residues: L-fucose mutarotase (144 aa).

His-22 acts as the Proton donor in catalysis. Residues Asp-30, Arg-109, and 131–133 (YGN) each bind substrate.

The protein belongs to the RbsD / FucU family. FucU mutarotase subfamily. As to quaternary structure, homodecamer.

It is found in the cytoplasm. It catalyses the reaction alpha-L-fucose = beta-L-fucose. Its pathway is carbohydrate metabolism; L-fucose metabolism. Functionally, involved in the anomeric conversion of L-fucose. This Histophilus somni (strain 2336) (Haemophilus somnus) protein is L-fucose mutarotase.